We begin with the raw amino-acid sequence, 145 residues long: Bacilliredoxin SAR1592 (145 aa).

This sequence belongs to the bacilliredoxin family.

In Staphylococcus aureus (strain MRSA252), this protein is Bacilliredoxin SAR1592.